We begin with the raw amino-acid sequence, 467 residues long: MMETNNENKEKLKLYTWDEVSKHNQKNDLWIIVDGKVYNITKWVPLHPGGEDILLLSAGRDATNLFESYHPMTDKHYSLIKQYEIGYISSYEHPKYVEKSEFYSTLKQRVRKHFQTSSQDPKVSVGVFTRMVLIYLFLFVTYYLSQFSTDRFWLNCIFAVLYGVANSLFGLHTMHDACHTAITHNPMTWKILGATFDLFAGASFYAWCHQHVIGHHLYTNVRNADPDLGQGEIDFRVVTPYQARSWYHKYQHIYAPILYGVYALKYRIQDHEIFTKKSNGAIRYSPISTIDTAIFILGKLVFIISRFILPLIYNHSFSHLICFFLISELVLGWYLAISFQVSHVVEDLQFMATPEIFDGADHPLPTTFNQDWAILQVKTTQDYAQDSVLSTFFSGGLNLQVIHHCFPTIAQDYYPQIVPILKEVCKEYNVTYHYKPTFTEAIKSHINYLYKMGNDPDYVRKPVNKND.

Residues 12–89 (LKLYTWDEVS…IKQYEIGYIS (78 aa)) enclose the Cytochrome b5 heme-binding domain. Heme is bound by residues H47 and H70. 2 helical membrane passes run 123-143 (VSVGVFTRMVLIYLFLFVTYY) and 152-172 (FWLNCIFAVLYGVANSLFGLH). The Histidine box-1 motif lies at 175-179 (HDACH). A helical membrane pass occupies residues 187–207 (MTWKILGATFDLFAGASFYAW). Residues 211-216 (HVIGHH) carry the Histidine box-2 motif. 2 consecutive transmembrane segments (helical) span residues 293–313 (AIFILGKLVFIISRFILPLIY) and 317–337 (FSHLICFFLISELVLGWYLAI). Residues 400–404 (QVIHH) carry the Histidine box-3 motif.

The protein belongs to the fatty acid desaturase type 1 family. Requires Fe(2+) as cofactor.

The protein localises to the membrane. The catalysed reaction is an (8Z,11Z,14Z)-icosatrienoyl-containing glycerolipid + 2 Fe(II)-[cytochrome b5] + O2 + 2 H(+) = (5Z,8Z,11Z,14Z)-eicosatetraenoyl-containing glycerolipid + 2 Fe(III)-[cytochrome b5] + 2 H2O. The enzyme catalyses an (8Z,11Z,14Z,17Z)-eicosatetraenoyl-containing glycerolipid + 2 Fe(II)-[cytochrome b5] + O2 + 2 H(+) = a (5Z,8Z,11Z,14Z,17Z)-eicosapentaenoyl-containing glycerolipid + 2 Fe(III)-[cytochrome b5] + 2 H2O. In terms of biological role, fatty acid desaturase that introduces a cis double bond at the 5-position in 18-carbon polyunsaturated fatty acids. This Dictyostelium discoideum (Social amoeba) protein is Acyl-lipid (8-3)-desaturase B (fadB).